Consider the following 136-residue polypeptide: ATP synthase epsilon chain (136 aa).

It belongs to the ATPase epsilon chain family. As to quaternary structure, F-type ATPases have 2 components, CF(1) - the catalytic core - and CF(0) - the membrane proton channel. CF(1) has five subunits: alpha(3), beta(3), gamma(1), delta(1), epsilon(1). CF(0) has three main subunits: a, b and c.

Its subcellular location is the cellular thylakoid membrane. In terms of biological role, produces ATP from ADP in the presence of a proton gradient across the membrane. The sequence is that of ATP synthase epsilon chain from Parasynechococcus marenigrum (strain WH8102).